Reading from the N-terminus, the 197-residue chain is Nucleoid occlusion factor SlmA (197 aa).

The HTH tetR-type domain occupies 7 to 67 (INRREHILQC…GLIEFIEESL (61 aa)). Positions 30–49 (TTAKLASEVGVSEAALYRHF) form a DNA-binding region, H-T-H motif.

The protein belongs to the nucleoid occlusion factor SlmA family. As to quaternary structure, homodimer. Interacts with FtsZ.

It localises to the cytoplasm. The protein localises to the nucleoid. In terms of biological role, required for nucleoid occlusion (NO) phenomenon, which prevents Z-ring formation and cell division over the nucleoid. Acts as a DNA-associated cell division inhibitor that binds simultaneously chromosomal DNA and FtsZ, and disrupts the assembly of FtsZ polymers. SlmA-DNA-binding sequences (SBS) are dispersed on non-Ter regions of the chromosome, preventing FtsZ polymerization at these regions. The chain is Nucleoid occlusion factor SlmA from Shewanella sp. (strain MR-7).